A 415-amino-acid polypeptide reads, in one-letter code: Homoserine O-succinyltransferase (415 aa).

One can recognise an AB hydrolase-1 domain in the interval 69–383 (NAVLVCHALN…PHGHDAFLLD (315 aa)). The active-site Nucleophile is the Ser-175. Arg-245 serves as a coordination point for substrate. Catalysis depends on residues Asp-344 and His-377. Asp-378 contributes to the substrate binding site.

It belongs to the AB hydrolase superfamily. MetX family. In terms of assembly, homodimer.

It localises to the cytoplasm. The catalysed reaction is L-homoserine + succinyl-CoA = O-succinyl-L-homoserine + CoA. It participates in amino-acid biosynthesis; L-methionine biosynthesis via de novo pathway; O-succinyl-L-homoserine from L-homoserine: step 1/1. Its function is as follows. Transfers a succinyl group from succinyl-CoA to L-homoserine, forming succinyl-L-homoserine. In Bordetella parapertussis (strain 12822 / ATCC BAA-587 / NCTC 13253), this protein is Homoserine O-succinyltransferase.